An 842-amino-acid polypeptide reads, in one-letter code: MGMKSGWLLFYLLVSLIKVIGSEQHWVTVYYGVPVWREAETTLFCASDAKAHSTEAHNIWATQACVPTDPNPQEVLLPNVTEKFNMWENKMADQMQEDIISLWEQSLKPCVKLTPLCVTMLCNDSYGEERNNTNMTTREPDIGYKQMKNCSFNATTELTDKKKQVYSLFYVEDVVPINAYNKTYRLINCNTTAVTQACPKTSFEPIPIHYCAPPGFAIMKCNEGNFSGNGSCTNVSTVQCTHGIKPVISTQLILNGSLNTDGIVIRNDSHSNLLVQWNETVPINCTRPGNNTGGQVQIGPAMTFYNIEKIVGDIRQAYCNVSKELWEPMWNRTREEIKKILGKNNITFRARERNEGDLEVTHLMFNCRGEFFYCNTSKLFNEELLNETGEPITLPCRIRQIVNLWTRVGKGIYAPPIRGVLNCTSNITGLVLEYSGGPDTKETIVYPSGGNMVNLWRQELYKYKVVSIEPIGVAPGKAKRRTVSREKRAAFGLGALFLGFLGAAGSTMGAASITLTVQARTLLSGIVQQQNILLRAIEAQQHLLQLSIWGIKQLQAKVLAIERYLRDQQILSLWGCSGKTICYTTVPWNETWSNNTSYDTIWNNLTWQQWDEKVRNYSGVIFGLIEQAQEQQNTNEKSLLELDQWDSLWSWFGITKWLWYIKIAIMIVAGIVGIRIISIVITIIARVRQGYSPLSLQTLIPTARGPDRPEETEGGVGEQDRGRSVRLVSGFSALVWEDLRNLLIFLYHRLTDSLLILRRTLELLGQSLSRGLQLLNELRTHLWGILAYWGKELRDSAISLLNTTAIVVAEGTDRIIELAQRIGRGILHIPRRIRQGLERALI.

The signal sequence occupies residues 1 to 23 (MGMKSGWLLFYLLVSLIKVIGSE). At 24-663 (QHWVTVYYGV…ITKWLWYIKI (640 aa)) the chain is on the extracellular side. Residues C45 and C65 are joined by a disulfide bond. N-linked (GlcNAc...) asparagine; by host glycosylation is found at N79, N123, N131, N134, N149, N153, N181, N190, N225, N229, N234, N255, N267, N278, N284, N290, N320, N331, and N345. Disulfide bonds link C110–C198, C117–C189, C122–C150, C211–C240, and C221–C232. Positions 122–149 (CNDSYGEERNNTNMTTREPDIGYKQMKN) are V1. Residues 150–189 (CSFNATTELTDKKKQVYSLFYVEDVVPINAYNKTYRLINC) form a V2 region. The segment at 285 to 318 (CTRPGNNTGGQVQIGPAMTFYNIEKIVGDIRQAY) is V3. C285 and C319 are disulfide-bonded. Residues 353 to 363 (RNEGDLEVTHL) form a CD4-binding loop region. 2 disulfides stabilise this stretch: C367-C423 and C374-C396. Residues 374 to 396 (CNTSKLFNEELLNETGEPITLPC) form a V4 region. N-linked (GlcNAc...) asparagine; by host glycosylation is found at N375, N386, N422, and N426. 2 V5 regions span residues 439-448 (DTKETIVYPS) and 441-448 (KETIVYPS). Residues 489 to 510 (AAFGLGALFLGFLGAAGSTMGA) form a fusion peptide region. The segment at 552–570 (KQLQAKVLAIERYLRDQQI) is immunosuppression. C576 and C582 are oxidised to a cystine. N589, N594, N595, N604, and N616 each carry an N-linked (GlcNAc...) asparagine; by host glycan. The stretch at 612 to 646 (EKVRNYSGVIFGLIEQAQEQQNTNEKSLLELDQWD) forms a coiled coil. The interval 641 to 662 (ELDQWDSLWSWFGITKWLWYIK) is MPER; binding to GalCer. Residues 664–684 (AIMIVAGIVGIRIISIVITII) traverse the membrane as a helical segment. The Cytoplasmic segment spans residues 685-842 (ARVRQGYSPL…IRQGLERALI (158 aa)). Residues 691–694 (YSPL) carry the YXXL motif; contains endocytosis signal motif.

This sequence belongs to the HIV-1 env protein family. As to quaternary structure, the mature envelope protein (Env) consists of a homotrimer of non-covalently associated gp120-gp41 heterodimers. The resulting complex protrudes from the virus surface as a spike. There seems to be as few as 10 spikes on the average virion. Interacts with host CD4, CCR5 and CXCR4. Gp120 also interacts with the C-type lectins CD209/DC-SIGN and CLEC4M/DC-SIGNR (collectively referred to as DC-SIGN(R)). Gp120 and gp41 interact with GalCer. Gp120 interacts with host ITGA4/ITGB7 complex; on CD4+ T-cells, this interaction results in rapid activation of integrin ITGAL/LFA-1, which facilitates efficient cell-to-cell spreading of HIV-1. Gp120 interacts with cell-associated heparan sulfate; this interaction increases virus infectivity on permissive cells and may be involved in infection of CD4- cells. In terms of assembly, the mature envelope protein (Env) consists of a homotrimer of non-covalently associated gp120-gp41 heterodimers. The resulting complex protrudes from the virus surface as a spike. There seems to be as few as 10 spikes on the average virion. In terms of processing, highly glycosylated by host. The high number of glycan on the protein is reffered to as 'glycan shield' because it contributes to hide protein sequence from adaptive immune system. Palmitoylation of the transmembrane protein and of Env polyprotein (prior to its proteolytic cleavage) is essential for their association with host cell membrane lipid rafts. Palmitoylation is therefore required for envelope trafficking to classical lipid rafts, but not for viral replication. Post-translationally, specific enzymatic cleavages in vivo yield mature proteins. Envelope glycoproteins are synthesized as an inactive precursor that is heavily N-glycosylated and processed likely by host cell furin in the Golgi to yield the mature SU and TM proteins. The cleavage site between SU and TM requires the minimal sequence [KR]-X-[KR]-R. About 2 of the 9 disulfide bonds of gp41 are reduced by P4HB/PDI, following binding to CD4 receptor.

The protein resides in the virion membrane. Its subcellular location is the host cell membrane. The protein localises to the host endosome membrane. Oligomerizes in the host endoplasmic reticulum into predominantly trimers. In a second time, gp160 transits in the host Golgi, where glycosylation is completed. The precursor is then proteolytically cleaved in the trans-Golgi and thereby activated by cellular furin or furin-like proteases to produce gp120 and gp41. Its function is as follows. Attaches the virus to the host lymphoid cell by binding to the primary receptor CD4. This interaction induces a structural rearrangement creating a high affinity binding site for a chemokine coreceptor like CXCR4 and/or CCR5. Acts as a ligand for CD209/DC-SIGN and CLEC4M/DC-SIGNR, which are respectively found on dendritic cells (DCs), and on endothelial cells of liver sinusoids and lymph node sinuses. These interactions allow capture of viral particles at mucosal surfaces by these cells and subsequent transmission to permissive cells. HIV subverts the migration properties of dendritic cells to gain access to CD4+ T-cells in lymph nodes. Virus transmission to permissive T-cells occurs either in trans (without DCs infection, through viral capture and transmission), or in cis (following DCs productive infection, through the usual CD4-gp120 interaction), thereby inducing a robust infection. In trans infection, bound virions remain infectious over days and it is proposed that they are not degraded, but protected in non-lysosomal acidic organelles within the DCs close to the cell membrane thus contributing to the viral infectious potential during DCs' migration from the periphery to the lymphoid tissues. On arrival at lymphoid tissues, intact virions recycle back to DCs' cell surface allowing virus transmission to CD4+ T-cells. Functionally, acts as a class I viral fusion protein. Under the current model, the protein has at least 3 conformational states: pre-fusion native state, pre-hairpin intermediate state, and post-fusion hairpin state. During fusion of viral and target intracellular membranes, the coiled coil regions (heptad repeats) assume a trimer-of-hairpins structure, positioning the fusion peptide in close proximity to the C-terminal region of the ectodomain. The formation of this structure appears to drive apposition and subsequent fusion of viral and target cell membranes. Complete fusion occurs in host cell endosomes and is dynamin-dependent, however some lipid transfer might occur at the plasma membrane. The virus undergoes clathrin-dependent internalization long before endosomal fusion, thus minimizing the surface exposure of conserved viral epitopes during fusion and reducing the efficacy of inhibitors targeting these epitopes. Membranes fusion leads to delivery of the nucleocapsid into the cytoplasm. The sequence is that of Envelope glycoprotein gp160 from Human immunodeficiency virus type 1 group N (isolate YBF30) (HIV-1).